The sequence spans 61 residues: Inner membrane protein p12 (61 aa).

Residues 16 to 36 form a helical membrane-spanning segment; it reads LLIVAIIVVIMAIMLYYFWWM.

Belongs to the asfivirus inner membrane protein p12 family. As to quaternary structure, homomultimer; disulfide-linked. In terms of processing, not glycosylated.

Its subcellular location is the virion membrane. In Ornithodoros (relapsing fever ticks), this protein is Inner membrane protein p12.